Consider the following 287-residue polypeptide: Phosphatidylserine decarboxylase proenzyme (287 aa).

Catalysis depends on charge relay system; for autoendoproteolytic cleavage activity residues Asp-90, His-147, and Ser-252. The Schiff-base intermediate with substrate; via pyruvic acid; for decarboxylase activity role is filled by Ser-252. Ser-252 is modified (pyruvic acid (Ser); by autocatalysis).

Belongs to the phosphatidylserine decarboxylase family. PSD-B subfamily. Prokaryotic type I sub-subfamily. Heterodimer of a large membrane-associated beta subunit and a small pyruvoyl-containing alpha subunit. Requires pyruvate as cofactor. In terms of processing, is synthesized initially as an inactive proenzyme. Formation of the active enzyme involves a self-maturation process in which the active site pyruvoyl group is generated from an internal serine residue via an autocatalytic post-translational modification. Two non-identical subunits are generated from the proenzyme in this reaction, and the pyruvate is formed at the N-terminus of the alpha chain, which is derived from the carboxyl end of the proenzyme. The autoendoproteolytic cleavage occurs by a canonical serine protease mechanism, in which the side chain hydroxyl group of the serine supplies its oxygen atom to form the C-terminus of the beta chain, while the remainder of the serine residue undergoes an oxidative deamination to produce ammonia and the pyruvoyl prosthetic group on the alpha chain. During this reaction, the Ser that is part of the protease active site of the proenzyme becomes the pyruvoyl prosthetic group, which constitutes an essential element of the active site of the mature decarboxylase.

It localises to the cell membrane. It carries out the reaction a 1,2-diacyl-sn-glycero-3-phospho-L-serine + H(+) = a 1,2-diacyl-sn-glycero-3-phosphoethanolamine + CO2. Its pathway is phospholipid metabolism; phosphatidylethanolamine biosynthesis; phosphatidylethanolamine from CDP-diacylglycerol: step 2/2. Catalyzes the formation of phosphatidylethanolamine (PtdEtn) from phosphatidylserine (PtdSer). The chain is Phosphatidylserine decarboxylase proenzyme from Pseudomonas putida (strain GB-1).